Reading from the N-terminus, the 300-residue chain is Glycine--tRNA ligase alpha subunit (300 aa).

The protein belongs to the class-II aminoacyl-tRNA synthetase family. As to quaternary structure, tetramer of two alpha and two beta subunits.

Its subcellular location is the cytoplasm. It catalyses the reaction tRNA(Gly) + glycine + ATP = glycyl-tRNA(Gly) + AMP + diphosphate. This chain is Glycine--tRNA ligase alpha subunit, found in Pseudoalteromonas translucida (strain TAC 125).